We begin with the raw amino-acid sequence, 101 residues long: NAD(P)H-quinone oxidoreductase subunit 4L, chloroplastic (101 aa).

The next 3 membrane-spanning stretches (helical) occupy residues 2–22 (MLEH…YGLI), 32–52 (MCLE…SDLF), and 61–81 (VFSI…PAIV).

Belongs to the complex I subunit 4L family. NDH is composed of at least 16 different subunits, 5 of which are encoded in the nucleus.

It is found in the plastid. The protein resides in the chloroplast thylakoid membrane. It catalyses the reaction a plastoquinone + NADH + (n+1) H(+)(in) = a plastoquinol + NAD(+) + n H(+)(out). The catalysed reaction is a plastoquinone + NADPH + (n+1) H(+)(in) = a plastoquinol + NADP(+) + n H(+)(out). Its function is as follows. NDH shuttles electrons from NAD(P)H:plastoquinone, via FMN and iron-sulfur (Fe-S) centers, to quinones in the photosynthetic chain and possibly in a chloroplast respiratory chain. The immediate electron acceptor for the enzyme in this species is believed to be plastoquinone. Couples the redox reaction to proton translocation, and thus conserves the redox energy in a proton gradient. This Nuphar advena (Common spatterdock) protein is NAD(P)H-quinone oxidoreductase subunit 4L, chloroplastic.